Reading from the N-terminus, the 219-residue chain is Large ribosomal subunit protein bL25 (219 aa).

Positions 194 to 219 are disordered; the sequence is SSTELEETPEVPASAVPTTDQGESAE. A compositionally biased stretch (polar residues) spans 209 to 219; sequence VPTTDQGESAE.

Belongs to the bacterial ribosomal protein bL25 family. CTC subfamily. As to quaternary structure, part of the 50S ribosomal subunit; part of the 5S rRNA/L5/L18/L25 subcomplex. Contacts the 5S rRNA. Binds to the 5S rRNA independently of L5 and L18.

In terms of biological role, this is one of the proteins that binds to the 5S RNA in the ribosome where it forms part of the central protuberance. This is Large ribosomal subunit protein bL25 from Legionella pneumophila (strain Paris).